The chain runs to 155 residues: Small ribosomal subunit protein uS7cz/uS7cy (155 aa).

This sequence belongs to the universal ribosomal protein uS7 family. As to quaternary structure, part of the 30S ribosomal subunit.

It localises to the plastid. The protein resides in the chloroplast. Functionally, one of the primary rRNA binding proteins, it binds directly to 16S rRNA where it nucleates assembly of the head domain of the 30S subunit. The sequence is that of Small ribosomal subunit protein uS7cz/uS7cy (rps7-A) from Morus indica (Mulberry).